The primary structure comprises 109 residues: Flagellar hook-basal body complex protein FliE (109 aa).

The protein belongs to the FliE family.

Its subcellular location is the bacterial flagellum basal body. This chain is Flagellar hook-basal body complex protein FliE, found in Pseudomonas savastanoi pv. phaseolicola (strain 1448A / Race 6) (Pseudomonas syringae pv. phaseolicola (strain 1448A / Race 6)).